The chain runs to 350 residues: Ketol-acid reductoisomerase (NADP(+)) 2 (350 aa).

In terms of domain architecture, KARI N-terminal Rossmann spans 3–183 (ATIWYEKDAD…GALRAGAIKT (181 aa)). NADP(+)-binding positions include 26-29 (YGSQ), R49, S52, S54, and 84-87 (DQYQ). H109 is an active-site residue. An NADP(+)-binding site is contributed by G135. The region spanning 184 to 327 (TFTEETETDL…PKLRAMFSWN (144 aa)) is the KARI C-terminal knotted domain. The Mg(2+) site is built by D192, E196, E228, and E232. A substrate-binding site is contributed by S253. The interval 331–350 (AKDKDETESFNGKIARTQVQ) is disordered.

Belongs to the ketol-acid reductoisomerase family. Requires Mg(2+) as cofactor.

The catalysed reaction is (2R)-2,3-dihydroxy-3-methylbutanoate + NADP(+) = (2S)-2-acetolactate + NADPH + H(+). The enzyme catalyses (2R,3R)-2,3-dihydroxy-3-methylpentanoate + NADP(+) = (S)-2-ethyl-2-hydroxy-3-oxobutanoate + NADPH + H(+). It participates in amino-acid biosynthesis; L-isoleucine biosynthesis; L-isoleucine from 2-oxobutanoate: step 2/4. It functions in the pathway amino-acid biosynthesis; L-valine biosynthesis; L-valine from pyruvate: step 2/4. In terms of biological role, involved in the biosynthesis of branched-chain amino acids (BCAA). Catalyzes an alkyl-migration followed by a ketol-acid reduction of (S)-2-acetolactate (S2AL) to yield (R)-2,3-dihydroxy-isovalerate. In the isomerase reaction, S2AL is rearranged via a Mg-dependent methyl migration to produce 3-hydroxy-3-methyl-2-ketobutyrate (HMKB). In the reductase reaction, this 2-ketoacid undergoes a metal-dependent reduction by NADPH to yield (R)-2,3-dihydroxy-isovalerate. This chain is Ketol-acid reductoisomerase (NADP(+)) 2, found in Bifidobacterium longum (strain NCC 2705).